The following is a 375-amino-acid chain: tRNA-specific 2-thiouridylase MnmA (375 aa).

ATP contacts are provided by residues 7–14 and M33; that span reads GLSGGVDS. The segment at 102–104 is interaction with target base in tRNA; it reads NPD. Catalysis depends on C107, which acts as the Nucleophile. C107 and C205 are joined by a disulfide. G132 contacts ATP. An interaction with tRNA region spans residues 155–157; the sequence is KDQ. The active-site Cysteine persulfide intermediate is C205. The interaction with tRNA stretch occupies residues 313–314; the sequence is RY.

This sequence belongs to the MnmA/TRMU family.

It is found in the cytoplasm. It carries out the reaction S-sulfanyl-L-cysteinyl-[protein] + uridine(34) in tRNA + AH2 + ATP = 2-thiouridine(34) in tRNA + L-cysteinyl-[protein] + A + AMP + diphosphate + H(+). Functionally, catalyzes the 2-thiolation of uridine at the wobble position (U34) of tRNA, leading to the formation of s(2)U34. The protein is tRNA-specific 2-thiouridylase MnmA of Phytoplasma australiense.